The chain runs to 297 residues: Bifunctional protein FolD 2 (297 aa).

Residues 173 to 175 (GKS), Ser-198, and Ile-239 each bind NADP(+).

Belongs to the tetrahydrofolate dehydrogenase/cyclohydrolase family. Homodimer.

It catalyses the reaction (6R)-5,10-methylene-5,6,7,8-tetrahydrofolate + NADP(+) = (6R)-5,10-methenyltetrahydrofolate + NADPH. The catalysed reaction is (6R)-5,10-methenyltetrahydrofolate + H2O = (6R)-10-formyltetrahydrofolate + H(+). It participates in one-carbon metabolism; tetrahydrofolate interconversion. Catalyzes the oxidation of 5,10-methylenetetrahydrofolate to 5,10-methenyltetrahydrofolate and then the hydrolysis of 5,10-methenyltetrahydrofolate to 10-formyltetrahydrofolate. The protein is Bifunctional protein FolD 2 of Sinorhizobium medicae (strain WSM419) (Ensifer medicae).